The primary structure comprises 41 residues: Protein UL21 homolog (41 aa).

This sequence belongs to the herpesviridae UL21 family.

The polypeptide is Protein UL21 homolog (Equine herpesvirus 4 (strain 1942) (EHV-4)).